Reading from the N-terminus, the 673-residue chain is tRNA 5-methylaminomethyl-2-thiouridine biosynthesis bifunctional protein MnmC (673 aa).

Residues 1–245 (MSHAPIQTAA…KREMLIGELP (245 aa)) form a tRNA (mnm(5)s(2)U34)-methyltransferase region. Residues 272–673 (IGGGVASALT…VRKLLKGRAV (402 aa)) are FAD-dependent cmnm(5)s(2)U34 oxidoreductase.

The protein in the N-terminal section; belongs to the methyltransferase superfamily. tRNA (mnm(5)s(2)U34)-methyltransferase family. It in the C-terminal section; belongs to the DAO family. FAD is required as a cofactor.

It is found in the cytoplasm. It carries out the reaction 5-aminomethyl-2-thiouridine(34) in tRNA + S-adenosyl-L-methionine = 5-methylaminomethyl-2-thiouridine(34) in tRNA + S-adenosyl-L-homocysteine + H(+). In terms of biological role, catalyzes the last two steps in the biosynthesis of 5-methylaminomethyl-2-thiouridine (mnm(5)s(2)U) at the wobble position (U34) in tRNA. Catalyzes the FAD-dependent demodification of cmnm(5)s(2)U34 to nm(5)s(2)U34, followed by the transfer of a methyl group from S-adenosyl-L-methionine to nm(5)s(2)U34, to form mnm(5)s(2)U34. The protein is tRNA 5-methylaminomethyl-2-thiouridine biosynthesis bifunctional protein MnmC of Serratia proteamaculans (strain 568).